The chain runs to 273 residues: Shikimate dehydrogenase (NADP(+)) (273 aa).

Residues 19–21 (SQS) and T66 contribute to the shikimate site. K70 functions as the Proton acceptor in the catalytic mechanism. Residue E82 coordinates NADP(+). Shikimate contacts are provided by N91 and D107. NADP(+)-binding positions include 131–135 (GAGGA) and M217. Y219 serves as a coordination point for shikimate. G241 contributes to the NADP(+) binding site.

The protein belongs to the shikimate dehydrogenase family. In terms of assembly, homodimer.

It carries out the reaction shikimate + NADP(+) = 3-dehydroshikimate + NADPH + H(+). It participates in metabolic intermediate biosynthesis; chorismate biosynthesis; chorismate from D-erythrose 4-phosphate and phosphoenolpyruvate: step 4/7. Its function is as follows. Involved in the biosynthesis of the chorismate, which leads to the biosynthesis of aromatic amino acids. Catalyzes the reversible NADPH linked reduction of 3-dehydroshikimate (DHSA) to yield shikimate (SA). The chain is Shikimate dehydrogenase (NADP(+)) from Buchnera aphidicola subsp. Schizaphis graminum (strain Sg).